A 188-amino-acid chain; its full sequence is Elongation factor P (188 aa).

Lysine 34 bears the N6-(3,6-diaminohexanoyl)-5-hydroxylysine mark.

This sequence belongs to the elongation factor P family. May be beta-lysylated on the epsilon-amino group of Lys-34 by the combined action of EpmA and EpmB, and then hydroxylated on the C5 position of the same residue by EpmC (if this protein is present). Lysylation is critical for the stimulatory effect of EF-P on peptide-bond formation. The lysylation moiety may extend toward the peptidyltransferase center and stabilize the terminal 3-CCA end of the tRNA. Hydroxylation of the C5 position on Lys-34 may allow additional potential stabilizing hydrogen-bond interactions with the P-tRNA.

The protein resides in the cytoplasm. It functions in the pathway protein biosynthesis; polypeptide chain elongation. Functionally, involved in peptide bond synthesis. Alleviates ribosome stalling that occurs when 3 or more consecutive Pro residues or the sequence PPG is present in a protein, possibly by augmenting the peptidyl transferase activity of the ribosome. Modification of Lys-34 is required for alleviation. This Photobacterium profundum (strain SS9) protein is Elongation factor P.